We begin with the raw amino-acid sequence, 1580 residues long: Collagen alpha-1(XVI) chain (1580 aa).

Positions 1–21 (MLTSWAPGLWVLGLWATFSHG) are cleaved as a signal peptide. Asn47 carries N-linked (GlcNAc...) asparagine glycosylation. The 182-residue stretch at 50–231 (GFNLIRRLNL…LQQAHIYCDP (182 aa)) folds into the Laminin G-like domain. Positions 232–374 (ELVLEEGCCE…SPDAPLQCVE (143 aa)) are nonhelical region 10 (NC10). A disordered region spans residues 324–547 (RESNVTLGPS…DPAPAWEGLG (224 aa)). Asn327 carries N-linked (GlcNAc...) asparagine glycosylation. One can recognise a Collagen-like 1 domain in the interval 375–424 (GPKGEKGESGDLGPPGLPGPTGQKGQKGEKGDGGLKGLPGKPGRDGRPGE). A triple-helical region 9 (COL9) with 3 imperfections region spans residues 375-509 (GPKGEKGESG…PGTKGEKGDP (135 aa)). Over residues 449 to 460 (PGPPGLPGPPGI) the composition is skewed to pro residues. Gly residues predominate over residues 486-495 (GKEGPGGKPG). Residues 510 to 524 (CEVCPTLPEGSQNFV) are nonhelical region 9 (NC9). A triple-helical region 8 (COL8) with 1 imperfection region spans residues 525-570 (GLPGKPGPKGEPGDPAPAWEGLGTVGLKGDRGDPGIQGMKGEKGEP). Residues 555 to 557 (RGD) carry the Cell attachment site motif. Residues 571 to 586 (CSSCSSGVGAQHLGPS) are nonhelical region 8 (NC8). A compositionally biased stretch (low complexity) spans 585–598 (PSPGHGLPGLPGTS). The tract at residues 585–935 (PSPGHGLPGL…LPGQPGLTAE (351 aa)) is disordered. The interval 587 to 640 (PGHGLPGLPGTSGIPGPRGLKGEKGSFGDTGPAGVPGSPGPVGPAGIKGAKGEP) is triple-helical region 7 (COL7) with 1 imperfection. 2 consecutive Collagen-like domains span residues 590–643 (GLPG…PCEP) and 676–725 (GLPG…PAGP). A nonhelical region 7 (NC7) region spans residues 641–661 (CEPCTALSELQDGDMRVVHLP). The segment at 662–732 (GPAGEKGEPG…AGPKGEKGDG (71 aa)) is triple-helical region 6 (COL6) with 1 imperfection. Basic and acidic residues predominate over residues 683 to 693 (KAGERGLKGQK). The span at 698-714 (NPGDPGTPGITGQPGIS) shows a compositional bias: low complexity. The tract at residues 733-747 (CTACPSLQGALTDVS) is nonhelical region 6 (NC6). The tract at residues 748 to 870 (GLPGKPGPKG…RGEKGEPGEC (123 aa)) is triple-helical region 5 (COL5) with 3 imperfections. The Collagen-like 4 domain maps to 797–848 (GAEGPQGEPGTQGLPGTQGLPGPRGPPGSAGEKGAQGSPGPKGAIGPMGPPG). A compositionally biased stretch (low complexity) spans 801–817 (PQGEPGTQGLPGTQGLP). Residues 871-881 (SCPSRGEPIFS) are nonhelical region 5 (NC5). The interval 882-933 (GMPGAPGLWMGSSSQPGPQGPPGVPGPPGPPGMPGLQGVPGHNGLPGQPGLT) is triple-helical region 4 (COL4) with 2 imperfections. Residues 899 to 914 (PQGPPGVPGPPGPPGM) are compositionally biased toward pro residues. The nonhelical region 4 (NC4) stretch occupies residues 934-967 (AELGSLPIEKHLLKSICGDCAQGQTAHPAFLLEK). A triple-helical region 3 (COL3) region spans residues 968 to 982 (GEKGDQGIPGVPGFD). A nonhelical region 3 (NC3) region spans residues 983-1005 (NCARCFIERERPRAEEARGDNSE). Disordered regions lie at residues 995–1405 (RAEE…LPGS) and 1445–1523 (AAAP…GYGK). The Cell attachment site motif lies at 1000 to 1002 (RGD). Residues 1006-1063 (GEPGCSGSPGLPGPPGMPGQRGEEGPPGMRGSPGPPGPIGLQGERGLTGLTGDKGEPG) enclose the Collagen-like 5 domain. Residues 1006–1409 (GEPGCSGSPG…PGLPGSMGDM (404 aa)) form a triple-helical region 2 (COL2) with 2 imperfections region. The segment covering 1098-1107 (SGPPGSEGLP) has biased composition (low complexity). Pro residues-rich tracts occupy residues 1139–1148 (FPGPPGPPGF) and 1178–1187 (SPGPPGPPGI). The span at 1196–1205 (LDGKDGKPGL) shows a compositional bias: basic and acidic residues. A Cell attachment site motif is present at residues 1206 to 1208 (RGD). A Collagen-like 6 domain is found at 1210-1263 (GPAGPPGLMGPPGFKGKTGHPGLPGPKGDCGKPGPPGSSGRPGAEGEPGAMGPQ). Residues 1247-1263 (SSGRPGAEGEPGAMGPQ) show a composition bias toward low complexity. The span at 1265–1281 (RPGPPGHLGPPGQPGPP) shows a compositional bias: pro residues. Collagen-like domains follow at residues 1350–1407 (GQKG…GSMG), 1448–1500 (PGRP…GDIG), and 1504–1552 (AGEN…GKAG). Positions 1362–1371 (GMPGGPGKSG) are enriched in gly residues. The segment covering 1396-1405 (NPGLPGLPGS) has biased composition (low complexity). The interval 1410–1448 (VNYDDIKRFIRQEIIKLFDERMAYYTSRMQFPMEVAAAP) is nonhelical region 2 (NC2). A triple-helical region 1 (COL1) with 2 imperfections region spans residues 1449–1554 (GRPGPPGKDG…MGQPGKAGHC (106 aa)). Residues 1555–1580 (NPSDCFGAMPMEQQYPPMKSMKGPFG) form a nonhelical region 1 (NC1) region.

It belongs to the fibril-associated collagens with interrupted helices (FACIT) family. In terms of assembly, homotrimer. Interacts with FBN1, fibronectin and integrins ITGA1/ITGB1 and ITGA2/ITGB1. Integrin ITGA1/ITGB1 binds to a unique site within COL16A1 located close to its C-terminal end between collagenous domains COL1-COL3. Prolines at the third position of the tripeptide repeating unit (G-X-Y) are hydroxylated in some or all of the chains. In terms of processing, glycosylated. As to expression, expressed in most tissues examined with highest levels of expression observed in heart. Strongly expressed in cortical and medullar regions of kidney and more weakly expressed in lung. Also detected in the ciliary muscle of the eye, on the serosa layer lining the muscularis externa of intestinal tissue, and in the perimysium membrane lining both the cardiac muscle bundle and the smooth muscle tissue of the small intestine. Strongly stained in particulate or granular structures. Not detected in brain or skeletal muscle.

It is found in the secreted. It localises to the extracellular space. The protein resides in the extracellular matrix. Involved in mediating cell attachment and inducing integrin-mediated cellular reactions, such as cell spreading and alterations in cell morphology. The sequence is that of Collagen alpha-1(XVI) chain from Mus musculus (Mouse).